A 404-amino-acid polypeptide reads, in one-letter code: RING-H2 finger protein ATL11 (404 aa).

The N-terminal stretch at 1 to 36 (MNPKGRTNLNRSIIGGHDHGSILQLLLFLLLLSSHG) is a signal peptide. Residues 64–84 (AILMIVLVSVFFFLGFFSVYI) form a helical membrane-spanning segment. The segment at 144–186 (CSVCLNEFEDDETLRLIPKCCHVFHPGCIDAWLRSHTTCPLCR) adopts an RING-type; atypical zinc-finger fold. 2 disordered regions span residues 339 to 361 (PYRTSSINHMSPGGSGGDKVRAS) and 385 to 404 (VGENSSDHLRSCDATPSNTV).

It belongs to the RING-type zinc finger family. ATL subfamily.

It localises to the membrane. The catalysed reaction is S-ubiquitinyl-[E2 ubiquitin-conjugating enzyme]-L-cysteine + [acceptor protein]-L-lysine = [E2 ubiquitin-conjugating enzyme]-L-cysteine + N(6)-ubiquitinyl-[acceptor protein]-L-lysine.. It functions in the pathway protein modification; protein ubiquitination. In Arabidopsis thaliana (Mouse-ear cress), this protein is RING-H2 finger protein ATL11 (ATL11).